The primary structure comprises 355 residues: UDP-N-acetylglucosamine--N-acetylmuramyl-(pentapeptide) pyrophosphoryl-undecaprenol N-acetylglucosamine transferase (355 aa).

UDP-N-acetyl-alpha-D-glucosamine-binding positions include 15–17 (TGG), Asn127, Arg163, Ser191, Ile244, 263–268 (ALTVSE), and Gln288.

It belongs to the glycosyltransferase 28 family. MurG subfamily.

It localises to the cell inner membrane. The enzyme catalyses di-trans,octa-cis-undecaprenyl diphospho-N-acetyl-alpha-D-muramoyl-L-alanyl-D-glutamyl-meso-2,6-diaminopimeloyl-D-alanyl-D-alanine + UDP-N-acetyl-alpha-D-glucosamine = di-trans,octa-cis-undecaprenyl diphospho-[N-acetyl-alpha-D-glucosaminyl-(1-&gt;4)]-N-acetyl-alpha-D-muramoyl-L-alanyl-D-glutamyl-meso-2,6-diaminopimeloyl-D-alanyl-D-alanine + UDP + H(+). It participates in cell wall biogenesis; peptidoglycan biosynthesis. In terms of biological role, cell wall formation. Catalyzes the transfer of a GlcNAc subunit on undecaprenyl-pyrophosphoryl-MurNAc-pentapeptide (lipid intermediate I) to form undecaprenyl-pyrophosphoryl-MurNAc-(pentapeptide)GlcNAc (lipid intermediate II). In Escherichia coli (strain K12 / MC4100 / BW2952), this protein is UDP-N-acetylglucosamine--N-acetylmuramyl-(pentapeptide) pyrophosphoryl-undecaprenol N-acetylglucosamine transferase.